Here is a 338-residue protein sequence, read N- to C-terminus: Glycerol-3-phosphate dehydrogenase [NAD(P)+] (338 aa).

4 residues coordinate NADPH: Ser-14, Tyr-15, His-35, and Lys-109. Lys-109, Gly-138, and Thr-140 together coordinate sn-glycerol 3-phosphate. Ala-142 provides a ligand contact to NADPH. 5 residues coordinate sn-glycerol 3-phosphate: Lys-194, Asp-247, Ser-257, Arg-258, and Asn-259. Lys-194 (proton acceptor) is an active-site residue. Arg-258 is an NADPH binding site. Positions 282 and 284 each coordinate NADPH.

The protein belongs to the NAD-dependent glycerol-3-phosphate dehydrogenase family.

It localises to the cytoplasm. The catalysed reaction is sn-glycerol 3-phosphate + NAD(+) = dihydroxyacetone phosphate + NADH + H(+). It carries out the reaction sn-glycerol 3-phosphate + NADP(+) = dihydroxyacetone phosphate + NADPH + H(+). Its pathway is membrane lipid metabolism; glycerophospholipid metabolism. In terms of biological role, catalyzes the reduction of the glycolytic intermediate dihydroxyacetone phosphate (DHAP) to sn-glycerol 3-phosphate (G3P), the key precursor for phospholipid synthesis. This Shewanella sp. (strain MR-4) protein is Glycerol-3-phosphate dehydrogenase [NAD(P)+].